The sequence spans 269 residues: Phosphatidylglycerol--prolipoprotein diacylglyceryl transferase (269 aa).

4 helical membrane passes run 14–34 (IVQIGGFAVRWYSLLILAGII), 49–69 (VAPEVLSDLVVWLVVGAIPMA), 89–109 (VFAIWEGGIAIHGAILGGLLA), and 118–138 (GYSLLTMIDLAAPGLILGQAI). Arginine 140 serves as a coordination point for a 1,2-diacyl-sn-glycero-3-phospho-(1'-sn-glycerol). 3 helical membrane-spanning segments follow: residues 180-200 (TFLYESLWNLGVLALLLFVFF), 208-228 (GSIACLYALAYSVGRFWIEGL), and 240-260 (TAQLVSLAGIVLGAVGLWWLN).

It belongs to the Lgt family.

It localises to the cell inner membrane. It catalyses the reaction L-cysteinyl-[prolipoprotein] + a 1,2-diacyl-sn-glycero-3-phospho-(1'-sn-glycerol) = an S-1,2-diacyl-sn-glyceryl-L-cysteinyl-[prolipoprotein] + sn-glycerol 1-phosphate + H(+). It functions in the pathway protein modification; lipoprotein biosynthesis (diacylglyceryl transfer). Catalyzes the transfer of the diacylglyceryl group from phosphatidylglycerol to the sulfhydryl group of the N-terminal cysteine of a prolipoprotein, the first step in the formation of mature lipoproteins. The sequence is that of Phosphatidylglycerol--prolipoprotein diacylglyceryl transferase from Gloeobacter violaceus (strain ATCC 29082 / PCC 7421).